The sequence spans 833 residues: Ribosome biogenesis protein BOP1 homolog (833 aa).

The tract at residues 20–202 is disordered; the sequence is NKKSEPIAVS…DSDDSSEDES (183 aa). Low complexity predominate over residues 36 to 56; that stretch reads SKPTTTATTTVSKSPVSTITT. 2 stretches are compositionally biased toward acidic residues: residues 90-111 and 136-150; these read SEDDEDYESEEDDEGDDEEDVE and EAEESLVEYQSEDDS. Low complexity predominate over residues 154–170; that stretch reads SSKSSSSTTTTTTTTKK. Polar residues predominate over residues 182–192; it reads KQWTNDPNQFY. The span at 193-202 shows a compositional bias: acidic residues; sequence DSDDSSEDES. WD repeat units follow at residues 331–370, 488–527, and 529–569; these read TKAIRMGWIKLNKKGKKGEKDKKDGNFDLWADEGEEKEKT, GHKARVRSISISPNGQWLASGSDDCTIKIWEVSSTRCLYS, and EVES…TQTE. Residues 568 to 592 are disordered; that stretch reads TEHSPETEKILTKPPTDSSTEQQQN. The span at 582–592 shows a compositional bias: polar residues; sequence PTDSSTEQQQN. 5 WD repeats span residues 618–660, 663–701, 704–743, 747–786, and 802–833; these read HHPF…TQSP, KSKTPNQVTRFHPNKPIFFVADQNIIRVYDLMKQELIKK, TGCRYISSIDIHPQGDNVIMGGYDKKVCWFDLDLSVRPYK, YHKMAVRKVIYHPTLPLFASCSDDLSIHVFHGMVYDDLLQ, and INDLGVLDIVFHPKQPWIFSSGADSTIRLYTN.

It belongs to the WD repeat BOP1/ERB1 family.

The protein localises to the nucleus. Its subcellular location is the nucleolus. The protein resides in the nucleoplasm. In terms of biological role, required for maturation of ribosomal RNAs and formation of the large ribosomal subunit. The chain is Ribosome biogenesis protein BOP1 homolog from Dictyostelium discoideum (Social amoeba).